Reading from the N-terminus, the 525-residue chain is Mitogen-activated protein kinase kinase 5 (525 aa).

In terms of domain architecture, Protein kinase spans 59-317 (ETEGGFLGKG…CTELLRHPFI (259 aa)). Residues 65 to 73 (LGKGSSGSV) and lysine 88 contribute to the ATP site. Catalysis depends on aspartate 178, which acts as the Proton acceptor. Residues 358–367 (SALPLASEGG) show a composition bias toward low complexity. 2 disordered regions span residues 358 to 392 (SALP…ERHD) and 438 to 468 (SASV…AQHR).

Belongs to the protein kinase superfamily. STE Ser/Thr protein kinase family. MAP kinase kinase subfamily. Mg(2+) serves as cofactor.

It carries out the reaction L-tyrosyl-[protein] + ATP = O-phospho-L-tyrosyl-[protein] + ADP + H(+). The enzyme catalyses L-seryl-[protein] + ATP = O-phospho-L-seryl-[protein] + ADP + H(+). It catalyses the reaction L-threonyl-[protein] + ATP = O-phospho-L-threonyl-[protein] + ADP + H(+). Its function is as follows. Protein kinase which phosphorylates and activates MPK4 in vitro. The polypeptide is Mitogen-activated protein kinase kinase 5 (Leishmania mexicana).